A 291-amino-acid chain; its full sequence is Beta-lactamase CTX-M-25 (291 aa).

The first 30 residues, 1 to 30, serve as a signal peptide directing secretion; sequence MMRKSVRRAMLMTTACVSLLLASVPLCAQA. Catalysis depends on Ser73, which acts as the Nucleophile; acyl-ester intermediate. Lys76, Ser133, Glu169, and Ser240 together coordinate a beta-lactam.

The protein belongs to the class-A beta-lactamase family. As to quaternary structure, monomer.

It is found in the secreted. It catalyses the reaction a beta-lactam + H2O = a substituted beta-amino acid. Its activity is regulated as follows. Inhibited by the beta-lactamase-blocking agents clavulanic acid and tazobactam; in the DH10B strain. Its function is as follows. Extended-spectrum beta-lactamase (ESBL) which confers resistance to penicillins, as well as first, second and third-generation cephalosporins. Has cefotaxime-hydrolyzing activity. Inactive against cephalosporin antibiotic, cefoxitin, and the carbapenem, imipenem. This chain is Beta-lactamase CTX-M-25, found in Escherichia coli.